The following is an 856-amino-acid chain: Dual specificity protein kinase TTK (856 aa).

An N-acetylmethionine modification is found at Met-1. The residue at position 32 (Thr-32) is a Phosphothreonine. Residues Ser-36, Ser-277, and Ser-342 each carry the phosphoserine modification. Thr-380 carries the phosphothreonine modification. Phosphoserine is present on residues Ser-383, Ser-435, and Ser-454. The Protein kinase domain occupies 524–790 (YSILKQIGSG…IPELLTHPYV (267 aa)). ATP contacts are provided by residues 530 to 538 (IGSGGSSKV) and Lys-552. The active-site Proton acceptor is Asp-646. The residue at position 820 (Ser-820) is a Phosphoserine. Positions 837-856 (CGEGQDSSSSKTFDKKRERK) are disordered.

Belongs to the protein kinase superfamily. Ser/Thr protein kinase family. As to quaternary structure, interacts with TPR; the interactions occurs in a microtubule-independent manner. Interacts with MAD1L1 and MAD2L1. Autophosphorylated. Present in rapidly proliferating cell lines; high levels in testis, bone marrow, spleen and thymus. Low levels in brain, heart, lung and kidney.

The catalysed reaction is L-seryl-[protein] + ATP = O-phospho-L-seryl-[protein] + ADP + H(+). It catalyses the reaction L-threonyl-[protein] + ATP = O-phospho-L-threonyl-[protein] + ADP + H(+). It carries out the reaction L-tyrosyl-[protein] + ATP = O-phospho-L-tyrosyl-[protein] + ADP + H(+). With respect to regulation, inhibited by the ATP-competitive kinase inhibitor, SP600125. In terms of biological role, involved in mitotic spindle assembly checkpoint signaling, a process that delays anaphase until chromosomes are bioriented on the spindle, and in the repair of incorrect mitotic kinetochore-spindle microtubule attachments. Phosphorylates MAD1L1 to promote the mitotic spindle assembly checkpoint. Phosphorylates CDCA8/Borealin leading to enhanced AURKB activity at the kinetochore. Phosphorylates SKA3 at 'Ser-34' leading to dissociation of the SKA complex from microtubules and destabilization of microtubule-kinetochore attachments. Phosphorylates KNL1, KNTC1 and autophosphorylates. Phosphorylates MCRS1 which enhances recruitment of KIF2A to the minus end of spindle microtubules and promotes chromosome alignment. The chain is Dual specificity protein kinase TTK (Ttk) from Mus musculus (Mouse).